Here is a 322-residue protein sequence, read N- to C-terminus: MATRNRTLLFRKYRNSLRSVRAPLSSSSLTGTRSGGVGPVIEMASTSLLNPNRSYAPISTEDPGTSSKGAITVGLPPAWVDVSEEISVNIQRARTKMAELGKAHAKALMPSFGDGKEDQHNIESLTQEITFLLKKSEKQLQRLSASGPSEDSNVRKNVQRSLATDLQLLSMELRKKQSTYLKRLRQQKEDGMDLEMNLSRNRYRPEEDDFGDMLNEHQMSKIKKSEEVSVEREKEIQQVVESVNDLAQIMKDLSALVIDQGTIVDRIDYNIENVATTVEDGLKQLQKAERTQRHGGMVKCASVLVILCFIMLLLLILKEIFL.

At 1–301 (MATRNRTLLF…QRHGGMVKCA (301 aa)) the chain is on the cytoplasmic side. Residues 116–146 (KEDQHNIESLTQEITFLLKKSEKQLQRLSAS) adopt a coiled-coil conformation. The t-SNARE coiled-coil homology domain occupies 226–288 (EEVSVEREKE…EDGLKQLQKA (63 aa)). A helical; Anchor for type IV membrane protein membrane pass occupies residues 302-322 (SVLVILCFIMLLLLILKEIFL).

This sequence belongs to the syntaxin family. Interacts with VTI12 and SYP61 to form a t-SNARE complex and with VPS45. Interacts with TNO1. Binds to YKT61 and YKT62. Core constituent of the SNARE complex required for membrane fusion at the trans-Golgi network. Mostly expressed in flowers, to a lower extent in leaves and roots, and, at low levels, in stems.

The protein localises to the golgi apparatus. The protein resides in the trans-Golgi network membrane. Functionally, contributes to the regulation of secretory and vacuolar transport pathways in the post-Golgi network, and to the maintenance of the Golgi apparatus and trans-Golgi network (TGN) morphologies. Together with VTI12, required for membrane fusion. Vesicle trafficking protein that functions in the secretory pathway and mediates liposome fusion; the fusion of phospholipid vesicles containing SYP41 and VTI12 is triggered by YKT61 and YKT62. Required for extracellular resistance responses to a fungal pathogen. Also involved in the protection of chloroplasts from salicylic acid-dependent biotic stress. In Arabidopsis thaliana (Mouse-ear cress), this protein is Tlg2p-like protein a.